Reading from the N-terminus, the 236-residue chain is H2HPP isomerase (236 aa).

2 Cupin type-2 domains span residues Tyr40–Ile106 and Asn151–Val215. The a divalent metal cation site is built by His50, His52, Gln56, His91, His162, His164, Gln168, and His202. Tyr223 is a substrate binding site.

In terms of assembly, monomer. The cofactor is Fe(2+). Co(2+) is required as a cofactor.

The protein localises to the cytoplasm. It carries out the reaction 3-[(4R)-4-hydroxycyclohexa-1,5-dien-1-yl]-2-oxopropanoate = 3-[(1E,4R)-4-hydroxycyclohex-2-en-1-ylidene]pyruvate. The protein operates within antibiotic biosynthesis; bacilysin biosynthesis. Its function is as follows. Part of the bacABCDEF operon responsible for the biosynthesis of the nonribosomally synthesized dipeptide antibiotic bacilysin, composed of L-alanine and L-anticapsin. Bacilysin is an irreversible inactivator of the glutaminase domain of glucosamine synthetase. BacB catalyzes the allylic isomerization of the endocyclic-delta(4),delta(8)-7R-dihydro-hydroxyphenylpyruvate (en-H2HPP) to generate a mixture of 3E,7R- and 3Z, 7R-olefins of the exocyclic-delta(3),delta(5)-dihydro-hydroxyphenylpyruvate (ex-H2HPP). The polypeptide is H2HPP isomerase (Bacillus amyloliquefaciens (Bacillus velezensis)).